A 131-amino-acid chain; its full sequence is UPF0251 protein MMP0619 (131 aa).

The protein belongs to the UPF0251 family.

This chain is UPF0251 protein MMP0619, found in Methanococcus maripaludis (strain DSM 14266 / JCM 13030 / NBRC 101832 / S2 / LL).